The primary structure comprises 698 residues: Cytoplasmic polyadenylation element-binding protein 3 (698 aa).

The span at 1–11 (MQDDLLMDKSK) shows a compositional bias: basic and acidic residues. Disordered stretches follow at residues 1-114 (MQDD…WSTG) and 158-208 (AQTQ…SAAA). Low complexity predominate over residues 13-28 (QPQPQQQQRQQQQPQP). The segment covering 29–44 (ESSVSEAPSTPLSSET) has biased composition (polar residues). Positions 87-96 (PQQPPPPQEP) are enriched in pro residues. The span at 103–114 (LSPSFGSTWSTG) shows a compositional bias: polar residues. Positions 165–185 (QPPPPAPAPQPAQPAQPPQAQ) are enriched in pro residues. Residues 186–208 (PPQQRRSPASPSQAPYAQRSAAA) are compositionally biased toward low complexity. Residues Ser-192, Ser-195, and Ser-290 each carry the phosphoserine modification. Residue Arg-308 is modified to Asymmetric dimethylarginine. 2 RRM domains span residues 441–532 (RKVF…PWNL) and 549–631 (KTIF…PYVL).

This sequence belongs to the RRM CPEB family. As to quaternary structure, following synaptic activity, forms amyloid-like oligomers. Aggregation requires an intact actin cytoskeleton. Interacts with STAT5B; this inhibits STAT5B-mediated transcriptional activation. Interacts with E3 ubiquitin-protein ligase NEURL1; this leads to monoubiquitination and activation of CPEB3. Interacts with CAPN2; this leads to cleavage of CPEB3. Interacts (via C-terminal RNA-binding region) with TOB1; TOB1 also binds CNOT7/CAF1 and recruits it to CPEB3 to form a ternary complex. Interacts with SUMO-conjugating enzyme UBC9. Interacts with IPO5; the interaction is enhanced in a RAN-regulated manner following neuronal stimulation and mediates CPEB3 nuclear import. Interacts with exportin XPO1/CRM1. Activated by NEURL1-mediated monoubiquitination, resulting in the growth of new dendritic spines and increased levels of GRIA1 and GRIA2. NEURL1-mediated monoubiquitination facilitates synaptic plasticity and hippocampal-dependent memory storage. Post-translationally, under basal unstimulated conditions when CPEB3 is mainly unaggregated, sumoylated and acts as a translational repressor. Following neuronal stimulation, becomes desumoylated and aggregated which is required for the translation of mRNA targets and for dendritic filopodia formation. In terms of processing, following neuronal stimulation, cleaved by CAPN2 which abolishes its translational repressor activity, leading to translation of CPEB3 target mRNAs. Phosphorylation is enhanced by neuronal stimulation.

It localises to the cytoplasm. It is found in the nucleus. The protein resides in the synapse. The protein localises to the cell projection. Its subcellular location is the dendrite. It localises to the postsynaptic density. Sequence-specific RNA-binding protein which acts as a translational repressor in the basal unstimulated state but, following neuronal stimulation, acts as a translational activator. In contrast to CPEB1, does not bind to the cytoplasmic polyadenylation element (CPE), a uridine-rich sequence element within the mRNA 3'-UTR, but binds to a U-rich loop within a stem-loop structure. Required for the consolidation and maintenance of hippocampal-based long term memory. In the basal state, binds to the mRNA 3'-UTR of the glutamate receptors GRIA2/GLUR2 mRNA and negatively regulates their translation. Also represses the translation of DLG4, GRIN1, GRIN2A and GRIN2B. When activated, acts as a translational activator of GRIA1 and GRIA2. In the basal state, suppresses SUMO2 translation but activates it following neuronal stimulation. Binds to the 3'-UTR of TRPV1 mRNA and represses TRPV1 translation which is required to maintain normal thermoception. Binds actin mRNA, leading to actin translational repression in the basal state and to translational activation following neuronal stimulation. Negatively regulates target mRNA levels by binding to TOB1 which recruits CNOT7/CAF1 to a ternary complex and this leads to target mRNA deadenylation and decay. In addition to its role in translation, binds to and inhibits the transcriptional activation activity of STAT5B without affecting its dimerization or DNA-binding activity. This, in turn, represses transcription of the STAT5B target gene EGFR which has been shown to play a role in enhancing learning and memory performance. In contrast to CPEB1, CPEB2 and CPEB4, not required for cell cycle progression. The chain is Cytoplasmic polyadenylation element-binding protein 3 (CPEB3) from Homo sapiens (Human).